The sequence spans 279 residues: Probable endonuclease 4 (279 aa).

9 residues coordinate Zn(2+): His69, His109, Glu145, Asp179, His182, His216, Asp229, His231, and Glu261.

Belongs to the AP endonuclease 2 family. Zn(2+) serves as cofactor.

It catalyses the reaction Endonucleolytic cleavage to 5'-phosphooligonucleotide end-products.. Its function is as follows. Endonuclease IV plays a role in DNA repair. It cleaves phosphodiester bonds at apurinic or apyrimidinic (AP) sites, generating a 3'-hydroxyl group and a 5'-terminal sugar phosphate. The polypeptide is Probable endonuclease 4 (Buchnera aphidicola subsp. Schizaphis graminum (strain Sg)).